We begin with the raw amino-acid sequence, 147 residues long: Hemoglobin subunit delta (147 aa).

The 145-residue stretch at 3–147 (HLTPEEKALV…VANALAHKYH (145 aa)) folds into the Globin domain. Ser-51 carries the post-translational modification Phosphoserine. 2 residues coordinate heme b: His-64 and His-93.

The protein belongs to the globin family. As to quaternary structure, heterotetramer of two delta chains and two alpha chains. As to expression, red blood cells.

This is Hemoglobin subunit delta (HBD) from Trichechus manatus (Caribbean manatee).